The following is a 167-amino-acid chain: ATP synthase subunit b (167 aa).

The chain crosses the membrane as a helical span at residues 15-37 (FWQTVIFLVTLYLLSKFAWGPIM).

This sequence belongs to the ATPase B chain family. In terms of assembly, F-type ATPases have 2 components, F(1) - the catalytic core - and F(0) - the membrane proton channel. F(1) has five subunits: alpha(3), beta(3), gamma(1), delta(1), epsilon(1). F(0) has three main subunits: a(1), b(2) and c(10-14). The alpha and beta chains form an alternating ring which encloses part of the gamma chain. F(1) is attached to F(0) by a central stalk formed by the gamma and epsilon chains, while a peripheral stalk is formed by the delta and b chains.

The protein localises to the cell inner membrane. In terms of biological role, f(1)F(0) ATP synthase produces ATP from ADP in the presence of a proton or sodium gradient. F-type ATPases consist of two structural domains, F(1) containing the extramembraneous catalytic core and F(0) containing the membrane proton channel, linked together by a central stalk and a peripheral stalk. During catalysis, ATP synthesis in the catalytic domain of F(1) is coupled via a rotary mechanism of the central stalk subunits to proton translocation. Functionally, component of the F(0) channel, it forms part of the peripheral stalk, linking F(1) to F(0). The polypeptide is ATP synthase subunit b (Cytophaga hutchinsonii (strain ATCC 33406 / DSM 1761 / CIP 103989 / NBRC 15051 / NCIMB 9469 / D465)).